A 574-amino-acid polypeptide reads, in one-letter code: Adenine deaminase (574 aa).

This sequence belongs to the metallo-dependent hydrolases superfamily. Adenine deaminase family. Mn(2+) is required as a cofactor.

The enzyme catalyses adenine + H2O + H(+) = hypoxanthine + NH4(+). The chain is Adenine deaminase from Thermosipho melanesiensis (strain DSM 12029 / CIP 104789 / BI429).